Reading from the N-terminus, the 333-residue chain is Lipoyl synthase (333 aa).

The interval Met-1–Lys-29 is disordered. Residues Cys-80, Cys-85, Cys-91, Cys-106, Cys-110, Cys-113, and Ser-320 each contribute to the [4Fe-4S] cluster site. A Radical SAM core domain is found at Cys-91–Thr-309.

It belongs to the radical SAM superfamily. Lipoyl synthase family. [4Fe-4S] cluster serves as cofactor.

The protein localises to the cytoplasm. It carries out the reaction [[Fe-S] cluster scaffold protein carrying a second [4Fe-4S](2+) cluster] + N(6)-octanoyl-L-lysyl-[protein] + 2 oxidized [2Fe-2S]-[ferredoxin] + 2 S-adenosyl-L-methionine + 4 H(+) = [[Fe-S] cluster scaffold protein] + N(6)-[(R)-dihydrolipoyl]-L-lysyl-[protein] + 4 Fe(3+) + 2 hydrogen sulfide + 2 5'-deoxyadenosine + 2 L-methionine + 2 reduced [2Fe-2S]-[ferredoxin]. The protein operates within protein modification; protein lipoylation via endogenous pathway; protein N(6)-(lipoyl)lysine from octanoyl-[acyl-carrier-protein]: step 2/2. Its function is as follows. Catalyzes the radical-mediated insertion of two sulfur atoms into the C-6 and C-8 positions of the octanoyl moiety bound to the lipoyl domains of lipoate-dependent enzymes, thereby converting the octanoylated domains into lipoylated derivatives. The protein is Lipoyl synthase of Ralstonia pickettii (strain 12J).